Consider the following 487-residue polypeptide: E3 ubiquitin-protein ligase TRIM50 (487 aa).

An RING-type zinc finger spans residues 16 to 57; that stretch reads CPICLEVFKEPLMLQCGHSYCKGCLVSLSCHLDAELRCPVCR. The B box-type zinc-finger motif lies at 84–125; that stretch reads PEPKVCVHHRNPLSLFCEKDQELICGLCGLLGSHQHHPVTPV. Residues Cys-89, His-92, Cys-111, and His-117 each coordinate Zn(2+). 2 coiled-coil regions span residues 125 to 169 and 204 to 235; these read VSTV…NESD and LVASLDMQLEQAQGTRERLAQAECVLEQFGNE. One can recognise a B30.2/SPRY domain in the interval 276–475; the sequence is DIKLTVWKRL…LPMVLPPPSG (200 aa). Residue Lys-373 is modified to N6-acetyllysine. Positions 468–487 are disordered; that stretch reads MVLPPPSGPGPLSPEQPTKL. The span at 469 to 481 shows a compositional bias: pro residues; sequence VLPPPSGPGPLSP.

This sequence belongs to the TRIM/RBCC family. In terms of assembly, can form dimers and trimers. Interacts with several E2 ubiquitin-conjugating enzymes, including UBE2L6, UBE2E1, UBE2E3. No interaction with UBE2H. Interacts with BECN1. Interacts with SQSTM1. Interacts with NLRP3. Auto-ubiquitinated. Post-translationally, acetylated by EP300 and KAT2B. HDAC6 drives TRIM50 deacetylation. Acetylation antagonizes with TRIM50 ubiquitination.

It localises to the cytoplasm. It catalyses the reaction S-ubiquitinyl-[E2 ubiquitin-conjugating enzyme]-L-cysteine + [acceptor protein]-L-lysine = [E2 ubiquitin-conjugating enzyme]-L-cysteine + N(6)-ubiquitinyl-[acceptor protein]-L-lysine.. In terms of biological role, E3 ubiquitin-protein ligase that ubiquitinates Beclin-1/BECN1 in a 'Lys-63'-dependent manner enhancing its binding to ULK1. In turn, promotes starvation-induced autophagy activation. Also interacts with p62/SQSTM1 protein and thereby induces the formation and the autophagy clearance of aggresome-associated polyubiquitinated proteins through HDAC6 interaction. Also promotes NLRP3 inflammasome activation by directly inducing NLRP3 oligomerization independent of its E3 ligase function. The sequence is that of E3 ubiquitin-protein ligase TRIM50 from Homo sapiens (Human).